Here is a 141-residue protein sequence, read N- to C-terminus: 3-hydroxyacyl-[acyl-carrier-protein] dehydratase FabZ (141 aa).

The active site involves H48.

It belongs to the thioester dehydratase family. FabZ subfamily.

The protein localises to the cytoplasm. The catalysed reaction is a (3R)-hydroxyacyl-[ACP] = a (2E)-enoyl-[ACP] + H2O. Involved in unsaturated fatty acids biosynthesis. Catalyzes the dehydration of short chain beta-hydroxyacyl-ACPs and long chain saturated and unsaturated beta-hydroxyacyl-ACPs. The protein is 3-hydroxyacyl-[acyl-carrier-protein] dehydratase FabZ of Bacillus velezensis (strain DSM 23117 / BGSC 10A6 / LMG 26770 / FZB42) (Bacillus amyloliquefaciens subsp. plantarum).